The chain runs to 181 residues: Lysozyme B (181 aa).

Positions 1 to 19 (MRISFFLLILAVIIGYAYG) are cleaved as a signal peptide. Positions 139 to 181 (LTDSRPLGPFNVTEEEKAQLFIDHEIAMAQCEAEKTCNGFDLE) are excised as a propeptide.

It belongs to the dictyostelium lysozyme family. In terms of processing, contains six disulfide bonds.

Its subcellular location is the cytoplasmic vesicle lumen. It catalyses the reaction Hydrolysis of (1-&gt;4)-beta-linkages between N-acetylmuramic acid and N-acetyl-D-glucosamine residues in a peptidoglycan and between N-acetyl-D-glucosamine residues in chitodextrins.. In terms of biological role, has antibacterial activity. This is Lysozyme B (alyB) from Dictyostelium discoideum (Social amoeba).